The primary structure comprises 325 residues: Ribosomal RNA small subunit methyltransferase H (325 aa).

S-adenosyl-L-methionine contacts are provided by residues 32–34 (GGH), aspartate 52, phenylalanine 79, aspartate 100, and glutamine 107.

This sequence belongs to the methyltransferase superfamily. RsmH family.

The protein localises to the cytoplasm. It carries out the reaction cytidine(1402) in 16S rRNA + S-adenosyl-L-methionine = N(4)-methylcytidine(1402) in 16S rRNA + S-adenosyl-L-homocysteine + H(+). Its function is as follows. Specifically methylates the N4 position of cytidine in position 1402 (C1402) of 16S rRNA. In Oceanobacillus iheyensis (strain DSM 14371 / CIP 107618 / JCM 11309 / KCTC 3954 / HTE831), this protein is Ribosomal RNA small subunit methyltransferase H.